Here is a 379-residue protein sequence, read N- to C-terminus: Protein RecA (379 aa).

79–86 (GPESSGKT) contributes to the ATP binding site.

It belongs to the RecA family.

The protein localises to the cytoplasm. In terms of biological role, can catalyze the hydrolysis of ATP in the presence of single-stranded DNA, the ATP-dependent uptake of single-stranded DNA by duplex DNA, and the ATP-dependent hybridization of homologous single-stranded DNAs. It interacts with LexA causing its activation and leading to its autocatalytic cleavage. In Streptococcus uberis (strain ATCC BAA-854 / 0140J), this protein is Protein RecA.